The following is a 244-amino-acid chain: tRNA pseudouridine synthase A (244 aa).

D52 functions as the Nucleophile in the catalytic mechanism. Y110 lines the substrate pocket.

This sequence belongs to the tRNA pseudouridine synthase TruA family. As to quaternary structure, homodimer.

The catalysed reaction is uridine(38/39/40) in tRNA = pseudouridine(38/39/40) in tRNA. In terms of biological role, formation of pseudouridine at positions 38, 39 and 40 in the anticodon stem and loop of transfer RNAs. This chain is tRNA pseudouridine synthase A, found in Clostridium acetobutylicum (strain ATCC 824 / DSM 792 / JCM 1419 / IAM 19013 / LMG 5710 / NBRC 13948 / NRRL B-527 / VKM B-1787 / 2291 / W).